The primary structure comprises 145 residues: MKVVGLTKKIMEHLKEPITIKELAKKLNMHPKNLDVKIRVLRDLGLVETKKGRNGGVRLTKEGLYLLEKGEITLGSLKLQIVAKDRIGLLADITSRISKIGGNITSTVLEREGDEVIIYLVVENVDKDEIKNTLEDVVEKISILW.

Residues 78–145 enclose the ACT domain; sequence KLQIVAKDRI…DVVEKISILW (68 aa).

This is an uncharacterized protein from Methanocaldococcus jannaschii (strain ATCC 43067 / DSM 2661 / JAL-1 / JCM 10045 / NBRC 100440) (Methanococcus jannaschii).